The following is a 2381-amino-acid chain: Myb-like protein U (2381 aa).

4 disordered regions span residues 1 to 85 (MKTK…TSNN), 148 to 167 (SSSG…GGIS), 178 to 492 (PTIP…NNNN), and 641 to 696 (NINN…GDEM). 2 stretches are compositionally biased toward low complexity: residues 30–41 (SKSSSKVSQSSS) and 64–79 (TIPA…PTLT). 3 stretches are compositionally biased toward low complexity: residues 192–204 (NLSS…NILS), 225–261 (ENVN…SSSS), and 291–315 (SNKS…NNKK). The span at 331 to 343 (SEYDSSDSSDMDL) shows a compositional bias: acidic residues. The segment covering 363–405 (TTKPNNSNSNNNNNNNSINSTIPASNNINSANNSKTTNKNITS) has biased composition (low complexity). A compositionally biased stretch (polar residues) spans 421-430 (SETPILTSVK). Composition is skewed to low complexity over residues 435-492 (QQIP…NNNN) and 641-692 (NINN…NNNN). The Myb-like domain occupies 856-899 (WHEEEKLLFRELFCAYGRDWQMVSTLMCGTKSPTQIKNFYYDVR). Disordered regions lie at residues 932 to 1024 (KPEQ…ETPP), 1068 to 1093 (INQS…NINP), 1145 to 1207 (TSST…SNQE), 1295 to 1339 (STTT…PPID), 1422 to 1474 (PYYP…LSTP), 1597 to 1647 (PPAT…TTIV), 1667 to 1849 (PIVK…PPPV), 1961 to 1985 (TTVP…NGLA), 2055 to 2106 (TSTV…NGLT), and 2122 to 2280 (LSGI…NKND). Low complexity predominate over residues 936–953 (NVNSNNNNNGGGNSLKDG). Positions 982 to 995 (VKKKSRTASKRSFR) are enriched in basic residues. A compositionally biased stretch (polar residues) spans 1000-1013 (ANETNRTPKNQPKP). Low complexity-rich tracts occupy residues 1069 to 1092 (NQSS…NNIN), 1145 to 1186 (TSST…TGSA), 1195 to 1205 (VNNNNNNNLSN), and 1306 to 1325 (TTTP…QLQQ). The span at 1326 to 1337 (LPPPPPPPPKPP) shows a compositional bias: pro residues. Over residues 1427–1474 (PSSTTTNSATSTPTSTPTSTPSTSASTLTPTSTPTSTPVPAPTSLSTP) the composition is skewed to low complexity. Residues 1597 to 1606 (PPATITPILP) are compositionally biased toward pro residues. Residues 1618-1637 (SSSSSSSSSSSSSSSSSSSS) show a composition bias toward low complexity. Polar residues-rich tracts occupy residues 1638–1647 (TTKNNSTTIV) and 1671–1701 (QESN…KTLL). Low complexity-rich tracts occupy residues 1702 to 1735 (PSNS…NPSS) and 1743 to 1809 (TSNK…TLKP). Over residues 1829-1844 (APTNSTNQNTIPNATT) the composition is skewed to polar residues. Composition is skewed to low complexity over residues 1961–1970 (TTVPGTTTTT) and 2065–2097 (NNMT…QQST). Residues 2129-2138 (NTLSGKSPTP) show a composition bias toward polar residues. A compositionally biased stretch (low complexity) spans 2154–2209 (PSLSSSSANPISITNNTTSLSQQSNTTNTMPSTVSLSSGSTSINSNSSNSKSLRSP). Residues 2210–2278 (KSSDNDGKES…NNNDKFDSNK (69 aa)) are compositionally biased toward basic and acidic residues.

The sequence is that of Myb-like protein U (mybU) from Dictyostelium discoideum (Social amoeba).